The following is a 197-amino-acid chain: ATP-dependent Clp protease proteolytic subunit (197 aa).

Ser-98 (nucleophile) is an active-site residue. His-123 is an active-site residue.

Belongs to the peptidase S14 family. As to quaternary structure, fourteen ClpP subunits assemble into 2 heptameric rings which stack back to back to give a disk-like structure with a central cavity, resembling the structure of eukaryotic proteasomes.

The protein resides in the cytoplasm. The enzyme catalyses Hydrolysis of proteins to small peptides in the presence of ATP and magnesium. alpha-casein is the usual test substrate. In the absence of ATP, only oligopeptides shorter than five residues are hydrolyzed (such as succinyl-Leu-Tyr-|-NHMec, and Leu-Tyr-Leu-|-Tyr-Trp, in which cleavage of the -Tyr-|-Leu- and -Tyr-|-Trp bonds also occurs).. Its function is as follows. Cleaves peptides in various proteins in a process that requires ATP hydrolysis. Has a chymotrypsin-like activity. Plays a major role in the degradation of misfolded proteins. This Haemophilus ducreyi (strain 35000HP / ATCC 700724) protein is ATP-dependent Clp protease proteolytic subunit.